The chain runs to 196 residues: ATP-dependent Clp protease proteolytic subunit (196 aa).

Serine 101 serves as the catalytic Nucleophile. Histidine 126 is an active-site residue.

This sequence belongs to the peptidase S14 family. In terms of assembly, component of the chloroplastic Clp protease core complex.

The protein resides in the plastid. Its subcellular location is the chloroplast stroma. It carries out the reaction Hydrolysis of proteins to small peptides in the presence of ATP and magnesium. alpha-casein is the usual test substrate. In the absence of ATP, only oligopeptides shorter than five residues are hydrolyzed (such as succinyl-Leu-Tyr-|-NHMec, and Leu-Tyr-Leu-|-Tyr-Trp, in which cleavage of the -Tyr-|-Leu- and -Tyr-|-Trp bonds also occurs).. Functionally, cleaves peptides in various proteins in a process that requires ATP hydrolysis. Has a chymotrypsin-like activity. Plays a major role in the degradation of misfolded proteins. In Pleurastrum terricola (Filamentous green alga), this protein is ATP-dependent Clp protease proteolytic subunit.